The following is a 1020-amino-acid chain: Protein CLASP-2 (1020 aa).

A compositionally biased stretch (low complexity) spans 259–271 (ASDAASSSTSINS). 3 disordered regions span residues 259-280 (ASDA…PFRS), 329-387 (PMTT…RPSA), and 419-461 (LQKA…ALDT). Positions 329-343 (PMTTRTLSKIDTSPG) are enriched in polar residues. The segment covering 372-381 (SQPGSRNGSP) has biased composition (low complexity). Polar residues predominate over residues 450–460 (QKATPQKSALD). One copy of the HEAT repeat lies at 954–992 (LAPCVIKSYDSPSSAVRKTAVYCLVAMVNKLGMKTMEPH).

It belongs to the CLASP family. As to quaternary structure, interacts with hcp-1 and hcp-2.

Its subcellular location is the cytoplasm. The protein localises to the cytoskeleton. It is found in the microtubule organizing center. It localises to the centrosome. The protein resides in the chromosome. Its subcellular location is the centromere. The protein localises to the kinetochore. It is found in the spindle. Its function is as follows. Probable microtubule plus-end tracking protein that promotes the stabilization of dynamic microtubules. Required for the formation of mitotic and meiotic spindles. Specifically promotes the polymerization of kinetochore-bound microtubules. Also required for cytoplasmic streaming. Essential for embryonic development. The polypeptide is Protein CLASP-2 (cls-2) (Caenorhabditis elegans).